We begin with the raw amino-acid sequence, 84 residues long: MNISRMEQRVLHVLAQGGYIRHQREDGHICEIECFTREGYLLSDCTMAVFQQLRRKRLIESRMGSPYRISFKGRENVRAQLNNR.

It belongs to the UPF0386 family.

The polypeptide is UPF0386 protein Oant_1614 (Brucella anthropi (strain ATCC 49188 / DSM 6882 / CCUG 24695 / JCM 21032 / LMG 3331 / NBRC 15819 / NCTC 12168 / Alc 37) (Ochrobactrum anthropi)).